Here is a 367-residue protein sequence, read N- to C-terminus: tRNA pseudouridine synthase D (367 aa).

Asp80 acts as the Nucleophile in catalysis. Residues 156-316 (GIPNWFGEQR…LKQERRALRL (161 aa)) enclose the TRUD domain.

Belongs to the pseudouridine synthase TruD family.

The enzyme catalyses uridine(13) in tRNA = pseudouridine(13) in tRNA. Responsible for synthesis of pseudouridine from uracil-13 in transfer RNAs. In Xanthomonas campestris pv. campestris (strain 8004), this protein is tRNA pseudouridine synthase D.